Here is a 221-residue protein sequence, read N- to C-terminus: Germin-like protein 8-2 (221 aa).

Residues 1-24 form the signal peptide; sequence MASSSFSFLLVAALLGLASWKAIA. A disulfide bridge connects residues cysteine 34 and cysteine 49. N-linked (GlcNAc...) asparagine glycans are attached at residues asparagine 54 and asparagine 79. The Cupin type-1 domain maps to 64–215; it reads AMLDKPRDTN…AFQVDKKIID (152 aa). Mn(2+) is bound by residues histidine 112, histidine 114, glutamate 119, and histidine 160.

This sequence belongs to the germin family. As to quaternary structure, oligomer (believed to be a pentamer but probably hexamer).

It localises to the secreted. It is found in the extracellular space. The protein resides in the apoplast. Its function is as follows. Plays a role in broad-spectrum disease resistance. Probably has no oxalate oxidase activity even if the active site is conserved. The protein is Germin-like protein 8-2 (GER3) of Oryza sativa subsp. japonica (Rice).